A 186-amino-acid chain; its full sequence is Interferon beta (186 aa).

The first 21 residues, 1-21 (MTYRWILPMALLLCFSTTALS), serve as a signal peptide directing secretion. The residue at position 24 (Y24) is a Phosphotyrosine. A disulfide bridge connects residues C52 and C161. N101 and N136 each carry an N-linked (GlcNAc...) asparagine glycan.

This sequence belongs to the alpha/beta interferon family. In terms of assembly, monomer.

It is found in the secreted. In terms of biological role, type I interferon cytokine that plays a key role in the innate immune response to infection, developing tumors and other inflammatory stimuli. Signals via binding to high-affinity (IFNAR2) and low-affinity (IFNAR1) heterodimeric receptor, activating the canonical Jak-STAT signaling pathway resulting in transcriptional activation or repression of interferon-regulated genes that encode the effectors of the interferon response, such as antiviral proteins, regulators of cell proliferation and differentiation, and immunoregulatory proteins. Signals mostly via binding to a IFNAR1-IFNAR2 heterodimeric receptor, but can also function with IFNAR1 alone and independently of Jak-STAT pathways. Elicits a wide variety of responses, including antiviral and antibacterial activities, and can regulate the development of B-cells, myelopoiesis and lipopolysaccharide (LPS)-inducible production of tumor necrosis factor. Plays a role in neuronal homeostasis by regulating dopamine turnover and protecting dopaminergic neurons: acts by promoting neuronal autophagy and alpha-synuclein clearance, thereby preventing dopaminergic neuron loss. IFNB1 is more potent than interferon-alpha (IFN-alpha) in inducing the apoptotic and antiproliferative pathways required for control of tumor cell growth. The sequence is that of Interferon beta (IFNB1) from Equus caballus (Horse).